Here is a 711-residue protein sequence, read N- to C-terminus: F-box only protein 34 (711 aa).

Disordered stretches follow at residues Met1 to Glu36, Ser249 to Glu271, Asp337 to Asp372, and Tyr494 to Glu529. The span at Gln10 to Gln23 shows a compositional bias: basic and acidic residues. The segment covering Arg354–Gln364 has biased composition (basic and acidic residues). In terms of domain architecture, F-box spans Gln572–Asp624.

In terms of assembly, directly interacts with SKP1 and CUL1.

Substrate-recognition component of the SCF (SKP1-CUL1-F-box protein)-type E3 ubiquitin ligase complex. The protein is F-box only protein 34 (FBXO34) of Homo sapiens (Human).